The sequence spans 331 residues: UDP-GalNAc:beta-1,3-N-acetylgalactosaminyltransferase 1 (331 aa).

Over 1–20 (MASALWTVLPSRMSLRSLKW) the chain is Cytoplasmic. A helical; Signal-anchor for type II membrane protein membrane pass occupies residues 21–43 (SLLLLSLLSFFVMWYLSLPHYNV). Over 44-331 (IERVNWMYFY…VMLRNTTCHY (288 aa)) the chain is Lumenal. 5 N-linked (GlcNAc...) asparagine glycosylation sites follow: Asn72, Asn154, Asn198, Asn212, and Asn326.

The protein belongs to the glycosyltransferase 31 family. Mg(2+) serves as cofactor. As to expression, higher expression in heart and brain, and to a lesser extent in lung, placenta, kidney and testis. Lower expression in liver, spleen and stomach. No expression in skeletal muscle.

The protein resides in the golgi apparatus membrane. The enzyme catalyses a globoside Gb3Cer (d18:1(4E)) + UDP-N-acetyl-alpha-D-galactosamine = a globoside Gb4Cer (d18:1(4E)) + UDP + H(+). It participates in protein modification; protein glycosylation. Transfers N-acetylgalactosamine onto globotriaosylceramide. Plays a critical role in preimplantation stage embryonic development. The sequence is that of UDP-GalNAc:beta-1,3-N-acetylgalactosaminyltransferase 1 from Homo sapiens (Human).